The chain runs to 161 residues: Phage-like element PBSX protein XkdI (161 aa).

To B.subtilis YqbI.

This chain is Phage-like element PBSX protein XkdI (xkdI), found in Bacillus subtilis (strain 168).